The following is a 319-amino-acid chain: tRNA uridine(34) hydroxylase (319 aa).

The Rhodanese domain maps to 127–221 (KQEDTVIIDA…YGKDPEVQGE (95 aa)). The active-site Cysteine persulfide intermediate is the Cys-181.

This sequence belongs to the TrhO family.

It catalyses the reaction uridine(34) in tRNA + AH2 + O2 = 5-hydroxyuridine(34) in tRNA + A + H2O. Its function is as follows. Catalyzes oxygen-dependent 5-hydroxyuridine (ho5U) modification at position 34 in tRNAs. This chain is tRNA uridine(34) hydroxylase, found in Bacillus cereus (strain Q1).